The following is a 702-amino-acid chain: BRCA1-associated RING domain protein 1 (702 aa).

The RING-type zinc finger occupies 18-67 (CVKCKKPRGDLQYLGSSCKHAYCWECIATFQQKPSGKRSSVARHMCPSCA). 2 disordered regions span residues 153 to 205 (DENR…TSVK) and 281 to 346 (ASMS…YGTR). Residues 174–188 (ASPTRNSTKRPSTVS) show a composition bias toward polar residues. The segment covering 312–321 (IKSDKIERRS) has biased composition (basic and acidic residues). ANK repeat units follow at residues 347–376 (RGEA…CVNE), 379–408 (DGKT…VINA), and 413–442 (TLET…SIKI). Positions 601 to 702 (MQPKLFAGCK…LGCSITTPPH (102 aa)) constitute a BRCT domain.

In terms of assembly, heterodimer (via RING-type zinc finger) with brc-1 to form the core CeBCD complex. Brc-1-brd-1 heterodimer-containing CeBCD complexes bound to chromatin are activated as an E3-ubiquitin ligase in response to DNA damage. The heterodimer interacts with the recombinase rad-51 following ionizing irradiation; the interaction is direct. The heterodimer interacts the E2-ubiquitin-conjugating enzyme let-70 following ionizing irradiation. The heterodimer interacts with the pro-crossover proteins msh-5 and syp-3. Interacts with smt-3, tac-1 and ubc-9. In terms of processing, autoubiquitinated. Phosphorylation of CeBCD complexes is required for E3 ubiquitin-protein ligase activity.

The protein localises to the cytoplasm. The protein resides in the nucleus. It is found in the chromosome. The enzyme catalyses S-ubiquitinyl-[E2 ubiquitin-conjugating enzyme]-L-cysteine + [acceptor protein]-L-lysine = [E2 ubiquitin-conjugating enzyme]-L-cysteine + N(6)-ubiquitinyl-[acceptor protein]-L-lysine.. It participates in protein modification; protein ubiquitination. With respect to regulation, E3 ubiquitin-protein ligase activity of CeBCD complexes occurs at DNA damage sites. Following DNA damage, E3 ubiquitin-protein ligase activity is reduced by caffeine treatment (inhibitor of ATM and ATK kinase activity). Functionally, constituent of the CeBCD complex that possesses E3 ubiquitin-protein ligase activity. When bound to chromatin, the brc-1-brd-1 heterodimer within the CeBCD complex is inactive during normal conditions, but in response to DNA damage, the brc-1-brd-1 heterodimer associates with other proteins such as the recombinase rad-51 or the E2-ubiquitin-conjugating enzyme let-70, which activate the CeBCD complex as an E3-ubiquitin ligase. Moreover, association between the brc-1-brd-1 heterodimer and rad-51 and let-70, probably requires DNA checkpoint proteins such as atl-1 and mre-11 in order to induce ubiquitination at DNA damage sites. To this end, the brc-1-brd-1 heterodimer coordinates a diverse range of cellular pathways such as DNA damage repair, ubiquitination and transcriptional regulation to maintain genomic stability. Plays a role in triggering cellular responses at damage sites in response to DNA damage that may be induced by ionizing radiation for example. In particular, protects against chromosome non-disjunction and nuclear fragmentation during meiotic double-strand break repair to ensure sister chromatid recombination and aid chromosome stability. The protein is BRCA1-associated RING domain protein 1 of Caenorhabditis elegans.